The primary structure comprises 1154 residues: BEACH domain-containing protein lvsF (1154 aa).

Disordered regions lie at residues 92-123 (HLPTPQPIPQSILSPSKPTPTPTPPIVVEQPS) and 139-167 (TSKVTTPTPPTPTPTPPTPQPTSIAPTPT). Residues 145 to 158 (PTPPTPTPTPPTPQ) show a composition bias toward pro residues. A BEACH-type PH domain is found at 289 to 384 (DMNERNILEL…TRNQVYDLLV (96 aa)). A BEACH domain is found at 389 to 697 (TNIMHINEQA…QIFKTPHPQR (309 aa)). Disordered regions lie at residues 554-575 (SFESSSSSRNGGGGDDDDNFEN), 739-762 (NNLNNNNNNNNNNNSNSNSNLNNN), and 779-825 (NSLN…ENLN). 2 stretches are compositionally biased toward low complexity: residues 779 to 788 (NSLNNENNEN) and 795 to 822 (NSNSNSSDNIKNSNGFENNDNNFNNENE). WD repeat units follow at residues 858–897 (LHKDKISALYLSNNSETIYSVSLDSCLKIYSLKEKRQIRS), 900–939 (LCNLALSSFQLSKDEKYIIIGSWDNNIYVYSVGNGSISYS), 942–980 (GHSDAVSCLKLHNNNILVSGSWDSSVKVWRTHRQSNGAI), 992–1031 (DSDTEIRSIDISSNGTIFCAGSSDGYLYFYDLLTLQLIRR), 1034–1074 (CFFD…FSFK), 1076–1110 (KGEIHCLDSDGSSLIIGTDRGLCLWSLTTGTEIKD), and 1119–1154 (SSNESIHSLNVSINQSSNKPILLTGTEAGSISIWQQ).

In Dictyostelium discoideum (Social amoeba), this protein is BEACH domain-containing protein lvsF (lvsF).